We begin with the raw amino-acid sequence, 130 residues long: Nascent polypeptide-associated complex protein (130 aa).

The region spanning 8–75 (PKMMRQMQKM…AKNIKKDDIK (68 aa)) is the NAC-A/B domain.

This sequence belongs to the NAC-alpha family. In terms of assembly, homodimer. Interacts with the ribosome. Binds ribosomal RNA.

Functionally, contacts the emerging nascent chain on the ribosome. This chain is Nascent polypeptide-associated complex protein, found in Methanococcus aeolicus (strain ATCC BAA-1280 / DSM 17508 / OCM 812 / Nankai-3).